The primary structure comprises 328 residues: Sulfate adenylyltransferase subunit 2 (328 aa).

Disordered regions lie at residues 15–34 (AAPD…PSSH) and 304–328 (SERE…EGYF).

The protein belongs to the PAPS reductase family. CysD subfamily. In terms of assembly, heterodimer composed of CysD, the smaller subunit, and CysN.

It catalyses the reaction sulfate + ATP + H(+) = adenosine 5'-phosphosulfate + diphosphate. It functions in the pathway sulfur metabolism; hydrogen sulfide biosynthesis; sulfite from sulfate: step 1/3. In terms of biological role, with CysN forms the ATP sulfurylase (ATPS) that catalyzes the adenylation of sulfate producing adenosine 5'-phosphosulfate (APS) and diphosphate, the first enzymatic step in sulfur assimilation pathway. APS synthesis involves the formation of a high-energy phosphoric-sulfuric acid anhydride bond driven by GTP hydrolysis by CysN coupled to ATP hydrolysis by CysD. The polypeptide is Sulfate adenylyltransferase subunit 2 (Rhodopseudomonas palustris (strain BisA53)).